The chain runs to 108 residues: Nucleoid-associated protein BH02310 (108 aa).

The protein belongs to the YbaB/EbfC family. As to quaternary structure, homodimer.

It is found in the cytoplasm. It localises to the nucleoid. Functionally, binds to DNA and alters its conformation. May be involved in regulation of gene expression, nucleoid organization and DNA protection. The sequence is that of Nucleoid-associated protein BH02310 from Bartonella henselae (strain ATCC 49882 / DSM 28221 / CCUG 30454 / Houston 1) (Rochalimaea henselae).